The primary structure comprises 120 residues: Ribonuclease P protein component (120 aa).

This sequence belongs to the RnpA family. Consists of a catalytic RNA component (M1 or rnpB) and a protein subunit.

The catalysed reaction is Endonucleolytic cleavage of RNA, removing 5'-extranucleotides from tRNA precursor.. Its function is as follows. RNaseP catalyzes the removal of the 5'-leader sequence from pre-tRNA to produce the mature 5'-terminus. It can also cleave other RNA substrates such as 4.5S RNA. The protein component plays an auxiliary but essential role in vivo by binding to the 5'-leader sequence and broadening the substrate specificity of the ribozyme. The chain is Ribonuclease P protein component from Microcystis aeruginosa (strain NIES-843 / IAM M-2473).